Consider the following 382-residue polypeptide: 3-dehydroquinate synthase (382 aa).

NAD(+) is bound by residues Glu81–Lys86, Gly115–Asp119, Thr139–Ser140, Lys152, and Lys161. Glu194, His256, and His274 together coordinate Zn(2+).

Belongs to the sugar phosphate cyclases superfamily. Dehydroquinate synthase family. Co(2+) serves as cofactor. Zn(2+) is required as a cofactor. It depends on NAD(+) as a cofactor.

The protein localises to the cytoplasm. It catalyses the reaction 7-phospho-2-dehydro-3-deoxy-D-arabino-heptonate = 3-dehydroquinate + phosphate. It functions in the pathway metabolic intermediate biosynthesis; chorismate biosynthesis; chorismate from D-erythrose 4-phosphate and phosphoenolpyruvate: step 2/7. In terms of biological role, catalyzes the conversion of 3-deoxy-D-arabino-heptulosonate 7-phosphate (DAHP) to dehydroquinate (DHQ). In Bradyrhizobium sp. (strain BTAi1 / ATCC BAA-1182), this protein is 3-dehydroquinate synthase.